A 178-amino-acid polypeptide reads, in one-letter code: Zinc finger CCHC domain-containing protein 10 (178 aa).

Residues 21–38 (VRCQKCLEFGHWTYECKG) form a CCHC-type zinc finger. The tract at residues 66–178 (QSIGETNIEK…EPQKKKKKKK (113 aa)) is disordered. Composition is skewed to low complexity over residues 85 to 113 (SVTS…SSSS) and 121 to 164 (SLSS…SSES).

This is Zinc finger CCHC domain-containing protein 10 (Zcchc10) from Mus musculus (Mouse).